We begin with the raw amino-acid sequence, 740 residues long: Cell death abnormality protein 12 (740 aa).

The ELMO domain occupies 348-494; sequence SEIQKVLDID…FVLEQLRHVL (147 aa). The segment at 555-690 is required for punctate localization, cell corpse engulfment and distal cell tip migration; the sequence is INHLNYLKKG…ESLAYLVGNT (136 aa). The short motif at 724 to 727 is the SH3-binding element; that stretch reads PDVP.

In terms of assembly, interacts with psr-1. Forms a ternary complex with ced-2 and ced-5.

Its subcellular location is the cytoplasm. In terms of biological role, involved in apoptosis and necrosis. Required for the cell corpse engulfment process. Has roles in the formation of actin halos and distal tip cell migration. Plays no role in amphid axon outgrowth. This Caenorhabditis briggsae protein is Cell death abnormality protein 12.